The chain runs to 368 residues: DNA replication and repair protein RecF (368 aa).

30–37 (GKNGSGKT) lines the ATP pocket.

It belongs to the RecF family.

The protein resides in the cytoplasm. Its function is as follows. The RecF protein is involved in DNA metabolism; it is required for DNA replication and normal SOS inducibility. RecF binds preferentially to single-stranded, linear DNA. It also seems to bind ATP. In Marinomonas sp. (strain MWYL1), this protein is DNA replication and repair protein RecF.